We begin with the raw amino-acid sequence, 190 residues long: U1 small nuclear ribonucleoprotein C-1 (190 aa).

The Matrin-type zinc finger occupies 4 to 36; that stretch reads YYCDYCDVFLVSESPSVRKAHNSGRNHLTNVRD. The segment at 57–190 is disordered; it reads FETGGGNSTS…PDRARQLGLI (134 aa). Over residues 72–82 the composition is skewed to pro residues; sequence GNPPGSQPGPP. Over residues 109–124 the composition is skewed to low complexity; it reads AMLALMNGQNGMSSPG. The segment covering 125–141 has biased composition (pro residues); it reads SGPPPMRFAGPPIPNNM. Over residues 180–190 the composition is skewed to basic and acidic residues; that stretch reads NPDRARQLGLI.

Belongs to the U1 small nuclear ribonucleoprotein C family. In terms of assembly, U1 snRNP is composed of the 7 core Sm proteins B/B', D1, D2, D3, E, F and G that assemble in a heptameric protein ring on the Sm site of the small nuclear RNA to form the core snRNP, and at least 3 U1 snRNP-specific proteins U1-70K, U1-A and U1-C. U1-C interacts with U1 snRNA and the 5' splice-site region of the pre-mRNA.

The protein resides in the nucleus. Functionally, component of the spliceosomal U1 snRNP, which is essential for recognition of the pre-mRNA 5' splice-site and the subsequent assembly of the spliceosome. U1-C is directly involved in initial 5' splice-site recognition for both constitutive and regulated alternative splicing. The interaction with the 5' splice-site seems to precede base-pairing between the pre-mRNA and the U1 snRNA. Stimulates commitment or early (E) complex formation by stabilizing the base pairing of the 5' end of the U1 snRNA and the 5' splice-site region. The chain is U1 small nuclear ribonucleoprotein C-1 from Puccinia graminis f. sp. tritici (strain CRL 75-36-700-3 / race SCCL) (Black stem rust fungus).